The sequence spans 1300 residues: Sal-like protein 3 (1300 aa).

Basic residues predominate over residues 1–11 (MSRRKQAKPQH). Disordered regions lie at residues 1-51 (MSRR…EETS), 84-162 (EDAP…YGAP), 234-258 (QRPPPRPSLSPAAAPSAPGPAPSQL), and 277-352 (GSGP…GSLL). The segment at 51–73 (SVCEKCCAEFFKWADFLEHQRSC) adopts a C2H2-type 1; atypical zinc-finger fold. Pro residues predominate over residues 87 to 100 (PAPPPEDFPEPSPA). A Phosphoserine modification is found at Ser109. Residues 122–132 (GEARPVEKEAE) show a composition bias toward basic and acidic residues. Residues 145-157 (PRPPPAAPAPPTP) show a composition bias toward pro residues. Low complexity-rich tracts occupy residues 277–319 (GSGP…AAPA) and 329–352 (PQSAASSQPQSASTPPALAPGSLL). C2H2-type zinc fingers lie at residues 420–442 (HKCRFCAKVFGSDSALQIHLRSH) and 448–470 (FKCNICGNRFSTKGNLKVHFQRH). A disordered region spans residues 523 to 633 (PTSVGLQLPP…VDGAPTSLGS (111 aa)). The segment covering 543 to 561 (SPSATPASRSPQRPSPASS) has biased composition (low complexity). Residues 577–586 (VSATAESPQS) show a composition bias toward polar residues. C2H2-type zinc fingers lie at residues 679–701 (NQCVICHRVLSCQSALKMHYRTH), 707–729 (FKCKICGRAFTTKGNLKTHFGVH), and 739–761 (HSCPICQKKFTNAVVLQQHIRMH). The segment at 864 to 955 (SVENGSGESD…GSGGAPGRAG (92 aa)) is disordered. Low complexity predominate over residues 889–910 (RSAGSPALSESSSSQALSPAPS). Position 919 is a phosphoserine (Ser919). C2H2-type zinc fingers lie at residues 977–999 (TVCGVCGKPFACKSALEIHYRSH), 1005–1027 (FVCALCRRGCSTMGNLKQHLLTH), 1113–1135 (HNCQSCGKTFSSASALQIHERTH), and 1141–1163 (FGCTICGRAFTTKGNLKVHMGTH). Ser1177 is subject to Phosphoserine. The disordered stretch occupies residues 1259–1279 (GMDKARTGSSPPIVSLDKASS).

The protein belongs to the sal C2H2-type zinc-finger protein family. Widely expressed in adult with highest levels in heart. Expressed in fetal brain (in neurons of hippocampus, cortex, mediodorsal and ventrolateral thalamic nuclei, putamen, cerebellum and brainstem).

It localises to the nucleus. Functionally, probable transcription factor. The sequence is that of Sal-like protein 3 (SALL3) from Homo sapiens (Human).